Consider the following 519-residue polypeptide: Dideacetyl fusicoccin A C-19 hydroxylase (519 aa).

The chain crosses the membrane as a helical span at residues 16 to 36 (LPVAPILFTALAATIGAFLLS). 4 N-linked (GlcNAc...) asparagine glycosylation sites follow: N177, N327, N414, and N432. C454 is a heme binding site.

It belongs to the cytochrome P450 family. Heme serves as cofactor.

The protein localises to the membrane. It participates in mycotoxin biosynthesis. Its function is as follows. Cytochrome P450 monooxygenase; part of the 2 gene clusters that mediate the biosynthesis of fusicoccins, diterpene glucosides that display phytohormone-like activity and function as potent activators of plasma membrane H(+)-ATPases in plants by modifying 14-3-3 proteins and cause the plant disease constriction canker. The first step in the pathway is performed by the fusicoccadiene synthase PaFS that possesses both prenyl transferase and terpene cyclase activity, converting isopentenyl diphosphate and dimethylallyl diphosphate into geranylgeranyl diphosphate (GGDP) and successively converting GGDP into fusicocca-2,10(14)-diene, a precursor for fusicoccin H. The second step is the oxidation at the C-8 position by the cytochrome P450 monooxygenase PaP450-2 to yield fusicocca-2,10(14)-diene-8-beta-ol. The cytochrome P450 monooxygenase PaP450-1 then catalyzes the hydroxylation at the C-16 position to produce fusicocca-2,10(14)-diene-8-beta,16-diol. The dioxygenase fc-dox then catalyzes the 16-oxydation of fusicocca-2,10(14)-diene-8-beta,16-diol to yield an aldehyde (8-beta-hydroxyfusicocca-1,10(14)-dien-16-al). The short-chain dehydrogenase/reductase fc-sdr catalyzes the reduction of the aldehyde to yield fusicocca-1,10(14)-diene-8-beta,16-diol. The next step is the hydroxylation at C-9 performed by the cytochrome P450 monooxygenase PaP450-3 that leads to fusicoccin H aglycon which is glycosylated to fusicoccin H by the O-glycosyltransferase PaGT. Hydroxylation at C-12 by the cytochrome P450 monooxygenase PaP450-4 leads then to the production of fusicoccin Q and is followed by methylation by the O-methyltransferase PaMT to yield fusicoccin P. Fusicoccin P is further converted to fusicoccin J via prenylation by the O-glucose prenyltransferase PaPT. Cytochrome P450 monooxygenase PaP450-5 then performs hydroxylation at C-19 to yield dideacetyl-fusicoccin A which is acetylated to 3'-O-deacetyl-fusicoccin A by the O-acetyltransferase PaAT-2. Finally, a another acetylation by the O-acetyltransferase PaAT-1 yields fusicoccin A. The polypeptide is Dideacetyl fusicoccin A C-19 hydroxylase (Phomopsis amygdali (Fusicoccum amygdali)).